We begin with the raw amino-acid sequence, 291 residues long: MVHKPVLLNEVVEALSPKDGSVYVDATFGGGGYSRRILETAQCVVYAIDQDVVVKKYFDELLQSFPGRLNLAISRFSKLREVVLSFGVDKVDGVVFDLGTSAMQLADASRGFSFMNSGSLDMRMCSSALRDAAMFVNTVPEKEMADVIYQYGGERYSRRVARAIIDARRKCRINNTGDLATIIRSAVPRSRVHPIDPATRTFQAIRIWVNNELEELQAGLEAAAEVLKIGGKILVTSFHSLEDRVVKHKFRSLCDMGFSLINKKAIMPTDEEVKNNPRSRSGKLRAIARVE.

Residues 31-33 (GGY), Asp-49, Phe-76, Asp-97, and Gln-104 each bind S-adenosyl-L-methionine.

It belongs to the methyltransferase superfamily. RsmH family.

Its subcellular location is the cytoplasm. The catalysed reaction is cytidine(1402) in 16S rRNA + S-adenosyl-L-methionine = N(4)-methylcytidine(1402) in 16S rRNA + S-adenosyl-L-homocysteine + H(+). In terms of biological role, specifically methylates the N4 position of cytidine in position 1402 (C1402) of 16S rRNA. The protein is Ribosomal RNA small subunit methyltransferase H of Anaplasma marginale (strain Florida).